Reading from the N-terminus, the 932-residue chain is Isoleucine--tRNA ligase (932 aa).

A 'HIGH' region motif is present at residues 58–68 (PYANGDIHIGH). Glu570 contacts L-isoleucyl-5'-AMP. The 'KMSKS' region motif lies at 611–615 (KMSKS). Residue Lys614 participates in ATP binding. Residues Cys895, Cys898, Cys915, and Cys918 each coordinate Zn(2+).

It belongs to the class-I aminoacyl-tRNA synthetase family. IleS type 1 subfamily. In terms of assembly, monomer. Requires Zn(2+) as cofactor.

It localises to the cytoplasm. It catalyses the reaction tRNA(Ile) + L-isoleucine + ATP = L-isoleucyl-tRNA(Ile) + AMP + diphosphate. Functionally, catalyzes the attachment of isoleucine to tRNA(Ile). As IleRS can inadvertently accommodate and process structurally similar amino acids such as valine, to avoid such errors it has two additional distinct tRNA(Ile)-dependent editing activities. One activity is designated as 'pretransfer' editing and involves the hydrolysis of activated Val-AMP. The other activity is designated 'posttransfer' editing and involves deacylation of mischarged Val-tRNA(Ile). This chain is Isoleucine--tRNA ligase, found in Dechloromonas aromatica (strain RCB).